A 493-amino-acid polypeptide reads, in one-letter code: GTPase Der (493 aa).

Residues 3 to 166 (PVIALVGRPN…EALGIFPKDN (164 aa)) enclose the EngA-type G 1 domain. GTP-binding positions include 9-16 (GRPNVGKS), 56-60 (DTGGI), and 118-121 (NKVD). The tract at residues 166–195 (NAEEEGEGEPASEEVAEGEEPTRIPGPSEK) is disordered. Positions 167 to 184 (AEEEGEGEPASEEVAEGE) are enriched in acidic residues. An EngA-type G 2 domain is found at 198-371 (IKIAIIGRPN…SVQESFRSAV (174 aa)). GTP contacts are provided by residues 204-211 (GRPNVGKS), 251-255 (DTAGV), and 316-319 (NKWD). The KH-like domain occupies 372–456 (TRWPTSRLTS…PIRIEYKGGE (85 aa)). The span at 454-463 (GGENPYEGKK) shows a compositional bias: basic and acidic residues. A disordered region spans residues 454 to 493 (GGENPYEGKKNSLTARQVNKKRRLMSHHKKAEKKKKDKRR). Positions 471-493 (VNKKRRLMSHHKKAEKKKKDKRR) are enriched in basic residues.

It belongs to the TRAFAC class TrmE-Era-EngA-EngB-Septin-like GTPase superfamily. EngA (Der) GTPase family. As to quaternary structure, associates with the 50S ribosomal subunit.

In terms of biological role, GTPase that plays an essential role in the late steps of ribosome biogenesis. The sequence is that of GTPase Der from Pseudomonas aeruginosa (strain ATCC 15692 / DSM 22644 / CIP 104116 / JCM 14847 / LMG 12228 / 1C / PRS 101 / PAO1).